A 732-amino-acid polypeptide reads, in one-letter code: Nephrocystin-1 (732 aa).

A coiled-coil region spans residues 3 to 105 (ARRQRDPLQA…LQGLAVTISR (103 aa)). At Y46 the chain carries Phosphotyrosine; by FAK2. Disordered stretches follow at residues 103-153 (ISRE…KWST) and 205-244 (TYLE…KQRT). Composition is skewed to acidic residues over residues 115-145 (TEEE…EKEE) and 210-236 (YSEE…ETAD). A phosphoserine; by CK2 mark is found at S121, S123, and S126. The stretch at 127–150 (EDSGGEEEDAEEEEEEKEENESHK) forms a coiled coil. An SH3 domain is found at 152-212 (STGEEYIAVG…PRTYLEPYSE (61 aa)). A Phosphotyrosine; by FAK2 modification is found at Y349. Y721 is modified (phosphotyrosine; by SRC).

This sequence belongs to the nephrocystin-1 family. In terms of assembly, interacts with BCAR1, PTK2B/PYK2 and tensin. Interacts with INVS and NPHP3. Interacts with PACS1; the interaction is dependent on NPHP1 phosphorylation by CK2. Interacts with KIF7. Interacts with AHI1 and TNK2. Interacts with NPHP4 in a complex containing NPHP1, NPHP4 and RPGRIP1L. Interacts with IQCB1; the interaction likely requires additional interactors. Interacts with ANKS3. Interacts with SPATA7. Interacts with FLNA. Phosphorylation by CK2 is required for the interaction with PACS1 and the targeting to the base region of cilia. In terms of tissue distribution, widespread expression, with highest levels in pituitary gland, spinal cord, thyroid gland, testis, skeletal muscle, lymph node and trachea. Weakly expressed in heart, kidney and pancreas. Expressed in nasal epithelial cells (at protein level). Expressed in the renal collecting duct (at protein level).

The protein localises to the cell junction. Its subcellular location is the adherens junction. It localises to the cell projection. The protein resides in the cilium. It is found in the cytoplasm. The protein localises to the cytoskeleton. Its subcellular location is the cilium axoneme. It localises to the tight junction. Its function is as follows. Together with BCAR1 it may play a role in the control of epithelial cell polarity. Involved in the organization of apical junctions in kidney cells together with NPHP4 and RPGRIP1L/NPHP8. Does not seem to be strictly required for ciliogenesis. Seems to help to recruit PTK2B/PYK2 to cell matrix adhesions, thereby initiating phosphorylation of PTK2B/PYK2 and PTK2B/PYK2-dependent signaling. May play a role in the regulation of intraflagellar transport (IFT) during cilia assembly. Required for normal retina development. In connecting photoreceptor cilia influences the movement of some IFT proteins such as IFT88 and WDR19. Involved in spermatogenesis. The sequence is that of Nephrocystin-1 (NPHP1) from Homo sapiens (Human).